The primary structure comprises 139 residues: Hydrogenase maturation factor HypA (139 aa).

His2 contacts Ni(2+). Residues Cys75, Cys78, Cys111, and Cys114 each contribute to the Zn(2+) site.

This sequence belongs to the HypA/HybF family.

Functionally, involved in the maturation of [NiFe] hydrogenases. Required for nickel insertion into the metal center of the hydrogenase. The chain is Hydrogenase maturation factor HypA from Ignicoccus hospitalis (strain KIN4/I / DSM 18386 / JCM 14125).